Reading from the N-terminus, the 178-residue chain is MSGGKYVDSEGHLYTAPIREQGNIYKPNNKAMAEEMNEKQVYDAHTKEIDLVNRDPKHLNDDVVKIDFEDVIAEPEGTHSFDGIWKASFTTFTVTKYWFYRLLSTLFGIPMALIWGIYFAILSFLHIWAVVPCIKSFLIEIQCIGRVYSIYIHTFCDPLFEAVGKLFSNIRINMQKEI.

Residue S2 is modified to N-acetylserine. The residue at position 2 (S2) is a Phosphoserine. Positions 2 to 94 (SGGKYVDSEG…WKASFTTFTV (93 aa)) are required for homooligomerization. Over 2 to 104 (SGGKYVDSEG…TKYWFYRLLS (103 aa)) the chain is Cytoplasmic. N6-acetyllysine; alternate is present on K5. K5 participates in a covalent cross-link: Glycyl lysine isopeptide (Lys-Gly) (interchain with G-Cter in ubiquitin); alternate. Phosphotyrosine is present on Y6. Phosphoserine is present on S9. Phosphotyrosine; by ABL1 is present on Y14. Y25 bears the Phosphotyrosine mark. Glycyl lysine isopeptide (Lys-Gly) (interchain with G-Cter in ubiquitin) cross-links involve residues K26, K30, K39, K47, and K57. Residues 82-94 (DGIWKASFTTFTV) form an interaction with CAVIN3 region. The segment at residues 105-125 (TLFGIPMALIWGIYFAILSFL) is an intramembrane region (helical). Over 126–178 (HIWAVVPCIKSFLIEIQCIGRVYSIYIHTFCDPLFEAVGKLFSNIRINMQKEI) the chain is Cytoplasmic. The tract at residues 131-142 (VPCIKSFLIEIQ) is interacts with SPRY1, SPRY2, SPRY3 and SPRY4. 3 S-palmitoyl cysteine lipidation sites follow: C133, C143, and C156. The segment at 149-160 (SIYIHTFCDPLF) is interacts with SPRY1, SPRY2, and SPRY4. Residues 167 to 178 (FSNIRINMQKEI) are interacts with SPRY1, SPRY2, SPRY3 and SPRY4.

This sequence belongs to the caveolin family. Homooligomer. Interacts with GLIPR2. Interacts with NOSTRIN. Interacts with SNAP25 and STX1A. Interacts (via the N-terminus) with DPP4; the interaction is direct. Interacts with CTNNB1, CDH1 and JUP. Interacts with PACSIN2; this interaction induces membrane tubulation. Interacts with SLC7A9. Interacts with BMX and BTK. Interacts with TGFBR1. Interacts with CAVIN3 (via leucine-zipper domain) in a cholesterol-sensitive manner. Interacts with CAVIN1. Interacts with EHD2 in a cholesterol-dependent manner. Forms a ternary complex with UBXN6 and VCP; mediates CAV1 targeting to lysosomes for degradation. Interacts with ABCG1; this interaction regulates ABCG1-mediated cholesterol efflux. Interacts with NEU3; this interaction enhances NEU3 sialidase activity within caveola. Interacts (via C-terminus) with SPRY1, SPRY2 (via C-terminus), SPRY3, and SPRY4. Interacts with IGFBP5; this interaction allows trafficking of IGFBP5 from the plasma membrane to the nucleus. In terms of processing, phosphorylated at Tyr-14 by ABL1 in response to oxidative stress. Post-translationally, ubiquitinated. Undergo monoubiquitination and multi- and/or polyubiquitination. Monoubiquitination of N-terminal lysines promotes integration in a ternary complex with UBXN6 and VCP which promotes oligomeric CAV1 targeting to lysosomes for degradation. Ubiquitinated by ZNRF1; leading to degradation and modulation of the TLR4-mediated immune response.

Its subcellular location is the golgi apparatus membrane. The protein localises to the cell membrane. It is found in the membrane. The protein resides in the caveola. It localises to the membrane raft. May act as a scaffolding protein within caveolar membranes. Forms a stable heterooligomeric complex with CAV2 that targets to lipid rafts and drives caveolae formation. Mediates the recruitment of CAVIN proteins (CAVIN1/2/3/4) to the caveolae. Interacts directly with G-protein alpha subunits and can functionally regulate their activity. Involved in the costimulatory signal essential for T-cell receptor (TCR)-mediated T-cell activation. Its binding to DPP4 induces T-cell proliferation and NF-kappa-B activation in a T-cell receptor/CD3-dependent manner. Recruits CTNNB1 to caveolar membranes and may regulate CTNNB1-mediated signaling through the Wnt pathway. Negatively regulates TGFB1-mediated activation of SMAD2/3 by mediating the internalization of TGFBR1 from membrane rafts leading to its subsequent degradation. Binds 20(S)-hydroxycholesterol (20(S)-OHC). The protein is Caveolin-1 (CAV1) of Dasypus novemcinctus (Nine-banded armadillo).